The chain runs to 153 residues: 6,7-dimethyl-8-ribityllumazine synthase (153 aa).

5-amino-6-(D-ribitylamino)uracil is bound by residues phenylalanine 21, 55–57 (AFE), and 79–81 (TVI). 84–85 (AT) contacts (2S)-2-hydroxy-3-oxobutyl phosphate. Histidine 87 acts as the Proton donor in catalysis. Residue phenylalanine 112 participates in 5-amino-6-(D-ribitylamino)uracil binding. A (2S)-2-hydroxy-3-oxobutyl phosphate-binding site is contributed by arginine 126.

This sequence belongs to the DMRL synthase family. As to quaternary structure, forms an icosahedral capsid composed of 60 subunits, arranged as a dodecamer of pentamers.

The enzyme catalyses (2S)-2-hydroxy-3-oxobutyl phosphate + 5-amino-6-(D-ribitylamino)uracil = 6,7-dimethyl-8-(1-D-ribityl)lumazine + phosphate + 2 H2O + H(+). The protein operates within cofactor biosynthesis; riboflavin biosynthesis; riboflavin from 2-hydroxy-3-oxobutyl phosphate and 5-amino-6-(D-ribitylamino)uracil: step 1/2. Its function is as follows. Catalyzes the formation of 6,7-dimethyl-8-ribityllumazine by condensation of 5-amino-6-(D-ribitylamino)uracil with 3,4-dihydroxy-2-butanone 4-phosphate. This is the penultimate step in the biosynthesis of riboflavin. The polypeptide is 6,7-dimethyl-8-ribityllumazine synthase (Bacillus cereus (strain 03BB102)).